The primary structure comprises 89 residues: Signal recognition particle 19 kDa protein (89 aa).

Belongs to the SRP19 family. In terms of assembly, part of the signal recognition particle protein translocation system, which is composed of SRP and FtsY. Archaeal SRP consists of a 7S RNA molecule of 300 nucleotides and two protein subunits: SRP54 and SRP19.

The protein localises to the cytoplasm. Functionally, involved in targeting and insertion of nascent membrane proteins into the cytoplasmic membrane. Binds directly to 7S RNA and mediates binding of the 54 kDa subunit of the SRP. This Methanococcus maripaludis (strain DSM 14266 / JCM 13030 / NBRC 101832 / S2 / LL) protein is Signal recognition particle 19 kDa protein.